We begin with the raw amino-acid sequence, 299 residues long: Oxygen-dependent coproporphyrinogen-III oxidase (299 aa).

Serine 92 lines the substrate pocket. A divalent metal cation-binding residues include histidine 96 and histidine 106. Histidine 106 functions as the Proton donor in the catalytic mechanism. 108-110 (NVR) lines the substrate pocket. Residues histidine 145 and histidine 175 each coordinate a divalent metal cation. The segment at 240–275 (YVEFNLVWDRGTLFGLQTGGRTESILMSMPPLVRWE) is important for dimerization. 258-260 (GGR) serves as a coordination point for substrate.

This sequence belongs to the aerobic coproporphyrinogen-III oxidase family. As to quaternary structure, homodimer. Requires a divalent metal cation as cofactor.

It localises to the cytoplasm. The enzyme catalyses coproporphyrinogen III + O2 + 2 H(+) = protoporphyrinogen IX + 2 CO2 + 2 H2O. It functions in the pathway porphyrin-containing compound metabolism; protoporphyrin-IX biosynthesis; protoporphyrinogen-IX from coproporphyrinogen-III (O2 route): step 1/1. Involved in the heme biosynthesis. Catalyzes the aerobic oxidative decarboxylation of propionate groups of rings A and B of coproporphyrinogen-III to yield the vinyl groups in protoporphyrinogen-IX. The chain is Oxygen-dependent coproporphyrinogen-III oxidase from Enterobacter sp. (strain 638).